The chain runs to 678 residues: Zinc finger translocation-associated protein (678 aa).

Disordered regions lie at residues 1-100 (MEPG…PGRD), 182-250 (LGVQ…GSRG), 329-417 (QPEA…HRRH), and 490-583 (LGPP…NYQP). Low complexity predominate over residues 62 to 78 (SAPLPSSRARGPASSGR). The span at 79-88 (KYSDHCEARA) shows a compositional bias: basic and acidic residues. The span at 187–201 (AEEEEEEEEEEEEEG) shows a compositional bias: acidic residues. Residue Lys375 forms a Glycyl lysine isopeptide (Lys-Gly) (interchain with G-Cter in SUMO2) linkage. A compositionally biased stretch (acidic residues) spans 388–398 (AEEEEELEEGE). Residues 492 to 504 (PPRPESPQGPIPP) are compositionally biased toward pro residues. Acidic residues-rich tracts occupy residues 513–529 (GGGDEEEEPEEEEEEWG) and 543–553 (AEEEEDEEDGQ). Positions 560–572 (LPPPPPPPPPPPP) are enriched in pro residues. A compositionally biased stretch (basic and acidic residues) spans 573 to 583 (RSREQRRNYQP).

In Homo sapiens (Human), this protein is Zinc finger translocation-associated protein.